The following is a 176-amino-acid chain: Nucleoside triphosphate/diphosphate phosphatase (176 aa).

R23 acts as the Proton donor in catalysis. Mg(2+) is bound by residues N87, D103, D105, D107, D120, and E123.

This sequence belongs to the Ntdp family. Mg(2+) serves as cofactor.

The enzyme catalyses a ribonucleoside 5'-triphosphate + H2O = a ribonucleoside 5'-diphosphate + phosphate + H(+). The catalysed reaction is a ribonucleoside 5'-diphosphate + H2O = a ribonucleoside 5'-phosphate + phosphate + H(+). Its function is as follows. Has nucleoside phosphatase activity towards nucleoside triphosphates and nucleoside diphosphates. The protein is Nucleoside triphosphate/diphosphate phosphatase of Lactococcus lactis subsp. cremoris (strain MG1363).